A 255-amino-acid polypeptide reads, in one-letter code: Thiazole synthase (255 aa).

Lys-96 acts as the Schiff-base intermediate with DXP in catalysis. Residues Gly-157, 183 to 184, and 205 to 206 each bind 1-deoxy-D-xylulose 5-phosphate; these read AG and NT.

Belongs to the ThiG family. As to quaternary structure, homotetramer. Forms heterodimers with either ThiH or ThiS.

The protein resides in the cytoplasm. It catalyses the reaction [ThiS sulfur-carrier protein]-C-terminal-Gly-aminoethanethioate + 2-iminoacetate + 1-deoxy-D-xylulose 5-phosphate = [ThiS sulfur-carrier protein]-C-terminal Gly-Gly + 2-[(2R,5Z)-2-carboxy-4-methylthiazol-5(2H)-ylidene]ethyl phosphate + 2 H2O + H(+). It functions in the pathway cofactor biosynthesis; thiamine diphosphate biosynthesis. In terms of biological role, catalyzes the rearrangement of 1-deoxy-D-xylulose 5-phosphate (DXP) to produce the thiazole phosphate moiety of thiamine. Sulfur is provided by the thiocarboxylate moiety of the carrier protein ThiS. In vitro, sulfur can be provided by H(2)S. The chain is Thiazole synthase from Anoxybacillus flavithermus (strain DSM 21510 / WK1).